Reading from the N-terminus, the 163-residue chain is MPKPPDYSELSDSLTLAVGTGRFSGPLHRAWRMMNFRQRMGWIGVGLYLLASAAAFYYVFEINETYNRLALEHIQQHPEEPLEGTTWTHSLKTRLLSLPFWFWTVVFLIPYLQMFLFLYSCTRADPKTVGYCIIPICLAVICNRHQAFVKASNQISRLQLIDT.

Transmembrane regions (helical) follow at residues 40–60 (MGWIGVGLYLLASAAAFYYVF) and 98–118 (LPFWFWTVVFLIPYLQMFLFL).

Belongs to the LYSET family. In terms of assembly, interacts with GNPTAB; this interaction is important for proper localization of GNPTAB in Golgi stacks. Interacts with MBTPS1.

The protein resides in the golgi apparatus membrane. Required for mannose-6-phosphate-dependent trafficking of lysosomal enzymes. LYSET bridges GlcNAc-1-phosphate transferase (GNPTAB), to the membrane-bound transcription factor site-1 protease (MBTPS1), thus allowing proteolytic activation of the GNPTAB. GNPTAB is involved in the regulation of M6P-dependent Golgi-to-lysosome trafficking of lysosomal enzymes. LYSET is thus an essential factor for maturation and delivery of lysosomal hydrolases. In Bos taurus (Bovine), this protein is Lysosomal enzyme trafficking factor (LYSET).